Reading from the N-terminus, the 510-residue chain is 2-isopropylmalate synthase (510 aa).

One can recognise a Pyruvate carboxyltransferase domain in the interval Leu-5 to Val-267. Positions 14, 202, 204, and 238 each coordinate Mn(2+). The interval Arg-392–Ile-510 is regulatory domain.

Belongs to the alpha-IPM synthase/homocitrate synthase family. LeuA type 1 subfamily. Homodimer. It depends on Mn(2+) as a cofactor.

It is found in the cytoplasm. The catalysed reaction is 3-methyl-2-oxobutanoate + acetyl-CoA + H2O = (2S)-2-isopropylmalate + CoA + H(+). It participates in amino-acid biosynthesis; L-leucine biosynthesis; L-leucine from 3-methyl-2-oxobutanoate: step 1/4. Functionally, catalyzes the condensation of the acetyl group of acetyl-CoA with 3-methyl-2-oxobutanoate (2-ketoisovalerate) to form 3-carboxy-3-hydroxy-4-methylpentanoate (2-isopropylmalate). The sequence is that of 2-isopropylmalate synthase from Nitrosomonas europaea (strain ATCC 19718 / CIP 103999 / KCTC 2705 / NBRC 14298).